A 195-amino-acid chain; its full sequence is CASP-like protein 1E2 (195 aa).

Over 1–29 (MEVESKTSFGGMESKSKEVKVVTGGKLRP) the chain is Cytoplasmic. A helical transmembrane segment spans residues 30-50 (FDLVLRVVALALTLVAAVLLG). Over 51–82 (VDKQTKVVSLQLLPTLPPMDVPVTAKWRYLSA) the chain is Extracellular. Residues 83-103 (FVYFVVSNAIACSYAALSLLL) form a helical membrane-spanning segment. At 104–122 (SVGNSKGNKGLGLAITVMD) the chain is on the cytoplasmic side. The helical transmembrane segment at 123–143 (LVMVALLFSSNGAAGAIGLMG) threads the bilayer. Residues 144-165 (YEGNSRVRWGKVCNVFGKFCNQ) are Extracellular-facing. Residues 166–186 (VAVALGLSFFGGLAFFLLVVM) form a helical membrane-spanning segment. The Cytoplasmic segment spans residues 187-195 (AAFALNKRH).

This sequence belongs to the Casparian strip membrane proteins (CASP) family. In terms of assembly, homodimer and heterodimers.

The protein resides in the cell membrane. In Vitis vinifera (Grape), this protein is CASP-like protein 1E2.